Reading from the N-terminus, the 455-residue chain is Lysine histidine transporter-like 4 (455 aa).

Residues 1-38 (MAGIPDHIQDQHLVEEDQPFDLEDWLPITASRNANWYY) are Cytoplasmic-facing. Residues 39–59 (SAFHNVTAIVGAGVLGLPYAM) traverse the membrane as a helical segment. At 60-61 (SE) the chain is on the extracellular side. Residues 62–82 (LGWGPGVVVLILSWVITLYTL) traverse the membrane as a helical segment. Residues 83–113 (WQMIEMHEMFEGQRFDRYHELGQAAFGKKLG) are Cytoplasmic-facing. Residues 114–134 (LYIIVPLQLLVEISVCIVYMV) form a helical membrane-spanning segment. The Extracellular segment spans residues 135–158 (TGGKSLKNVHDLALGDGDKCTKLR). A helical membrane pass occupies residues 159–179 (IQHFILIFASSQFVLSLLKNF). Residues 180–181 (NS) are Cytoplasmic-facing. A helical membrane pass occupies residues 182-202 (ISGVSLVAAVMSVSYSTIAWV). Over 203-226 (ASLRKGATTGSVEYGYRKRTTSVP) the chain is Extracellular. Residues 227–247 (LAFLSALGEMAFAYAGHNVVL) form a helical membrane-spanning segment. Over 248 to 267 (EIQATIPSTPENPSKRPMWK) the chain is Cytoplasmic. The chain crosses the membrane as a helical span at residues 268–288 (GAVVAYIIVAFCYFPVALVGF). Over 289-307 (KTFGNSVEESILESLTKPT) the chain is Extracellular. The helical transmembrane segment at 308–328 (ALVIVANMFVVIHLLGSYQVY) threads the bilayer. The Cytoplasmic portion of the chain corresponds to 329–357 (AMPVFDMIESVMIRIWHFSPTRVLRFTIR). Residues 358–378 (WTFVAATMGIAVGLPYYSALL) form a helical membrane-spanning segment. Position 379 (Ser-379) is a topological domain, extracellular. The helical transmembrane segment at 380–400 (FFGGFVFAPTTYFIPCIMWLI) threads the bilayer. Over 401–412 (LKKPKRFSLSWC) the chain is Cytoplasmic. Residues 413-433 (MNWFCIIFGLVLMIIAPIGGL) traverse the membrane as a helical segment. Over 434-455 (AKLIYNIQKGTLPNSRCNLPKH) the chain is Extracellular.

The protein belongs to the amino acid/polyamine transporter 2 family. Amino acid/auxin permease (AAAP) (TC 2.A.18.2) subfamily.

It localises to the cell membrane. Amino acid transporter. This Arabidopsis thaliana (Mouse-ear cress) protein is Lysine histidine transporter-like 4.